The primary structure comprises 124 residues: Small ribosomal subunit protein uS13 (124 aa).

Over residues 103-117 (KCNARTRKGPRKTVA) the composition is skewed to basic residues. The disordered stretch occupies residues 103-124 (KCNARTRKGPRKTVANKKIETK).

It belongs to the universal ribosomal protein uS13 family. In terms of assembly, part of the 30S ribosomal subunit. Forms a loose heterodimer with protein S19. Forms two bridges to the 50S subunit in the 70S ribosome.

Its function is as follows. Located at the top of the head of the 30S subunit, it contacts several helices of the 16S rRNA. In the 70S ribosome it contacts the 23S rRNA (bridge B1a) and protein L5 of the 50S subunit (bridge B1b), connecting the 2 subunits; these bridges are implicated in subunit movement. Contacts the tRNAs in the A and P-sites. The sequence is that of Small ribosomal subunit protein uS13 from Malacoplasma penetrans (strain HF-2) (Mycoplasma penetrans).